A 436-amino-acid chain; its full sequence is Tryptophan synthase beta chain (436 aa).

Lysine 129 bears the N6-(pyridoxal phosphate)lysine mark.

The protein belongs to the TrpB family. Tetramer of two alpha and two beta chains. It depends on pyridoxal 5'-phosphate as a cofactor.

It carries out the reaction (1S,2R)-1-C-(indol-3-yl)glycerol 3-phosphate + L-serine = D-glyceraldehyde 3-phosphate + L-tryptophan + H2O. Its pathway is amino-acid biosynthesis; L-tryptophan biosynthesis; L-tryptophan from chorismate: step 5/5. Functionally, the beta subunit is responsible for the synthesis of L-tryptophan from indole and L-serine. The chain is Tryptophan synthase beta chain from Prochlorococcus marinus (strain MIT 9313).